Here is a 467-residue protein sequence, read N- to C-terminus: Putative odorant receptor 85e (467 aa).

Residues 1–60 (MASLQFHGNVDADIRYDISLDPARESNLFRLLMGLQLANGTKPSPRLPKWWPKRLEMIGK) lie on the Cytoplasmic side of the membrane. Residues 61-81 (VLPKAYCSMVIFTSLHLGVLF) form a helical membrane-spanning segment. The Extracellular portion of the chain corresponds to 82–98 (TKTTLDVLPTGELQAIT). The helical transmembrane segment at 99 to 119 (DALTMTIIYFFTGYGTIYWCL) threads the bilayer. Residues 120–159 (RSRRLLAYMEHMNREYRHHSLAGVTFVSSHAAFRMSRNFT) are Cytoplasmic-facing. The chain crosses the membrane as a helical span at residues 160–180 (VVWIMSCLLGVISWGVSPLML). Over 181 to 212 (GIRMLPLQCWYPFDALGPGTYTAVYATQLFGQ) the chain is Extracellular. Residues 213 to 233 (IMVGMTFGFGGSLFVTLSLLL) traverse the membrane as a helical segment. The Cytoplasmic portion of the chain corresponds to 234 to 286 (LGQFDVLYCSLKNLDAHTKLLGGESVNGLSSLQEELLLGDSKRELNQYVLLQE). A helical transmembrane segment spans residues 287 to 307 (HPTDLLRLSAGRKCPDQGNAF). Residues 308-334 (HNALVECIRLHRFILHCSQELENLFSP) are Extracellular-facing. Residues 335–355 (YCLVKSLQITFQLCLLVFVGV) traverse the membrane as a helical segment. At 356–367 (SGTREVLRIVNQ) the chain is on the cytoplasmic side. A helical transmembrane segment spans residues 368–388 (LQYLGLTIFELLMFTYCGELL). At 389–467 (SRHSIRSGDA…LAAKKTESEL (79 aa)) the chain is on the extracellular side.

This sequence belongs to the insect chemoreceptor superfamily. Heteromeric odorant receptor channel (TC 1.A.69) family. Or2a subfamily. In terms of assembly, interacts with Orco. Complexes exist early in the endomembrane system in olfactory sensory neurons (OSNs), coupling these complexes to the conserved ciliary trafficking pathway. In terms of tissue distribution, expressed in 15% of the 120 sensory neurons within the maxillary palp.

It is found in the cell membrane. In terms of biological role, odorant receptor which mediates acceptance or avoidance behavior, depending on its substrates. The odorant receptor repertoire encodes a large collection of odor stimuli that vary widely in identity, intensity, and duration. May form a complex with Orco to form odorant-sensing units, providing sensitive and prolonged odorant signaling and calcium permeability. The protein is Putative odorant receptor 85e (Or85e) of Drosophila melanogaster (Fruit fly).